The primary structure comprises 54 residues: Rubredoxin-1 (54 aa).

Residues 1 to 52 form the Rubredoxin-like domain; it reads MKKWECVVCGFIYDEAEGLPDEGIEPGTAWNNVPEDWVCPDCGVGKDDFEMV. Cys6, Cys9, Cys39, and Cys42 together coordinate Fe cation.

It belongs to the rubredoxin family. Fe(3+) serves as cofactor.

It is found in the cytoplasm. It participates in hydrocarbon metabolism; alkane degradation. Its function is as follows. Involved in the hydrocarbon hydroxylating system, which transfers electrons from NADH to rubredoxin reductase and then through rubredoxin to alkane 1 monooxygenase. The chain is Rubredoxin-1 (rubA) from Alcanivorax borkumensis (strain ATCC 700651 / DSM 11573 / NCIMB 13689 / SK2).